A 242-amino-acid chain; its full sequence is Beta-glucanase (242 aa).

The signal sequence occupies residues 1-28 (MPYLKRVLLLLVTGLFMSLFAVTATASA). Gln-29 carries the pyrrolidone carboxylic acid modification. A GH16 domain is found at 29 to 242 (QTGGSFFDPF…HYDWVRYTKK (214 aa)). A disulfide bridge links Cys-60 with Cys-89. Residue Glu-133 is the Nucleophile of the active site. The Proton donor role is filled by Glu-137.

It belongs to the glycosyl hydrolase 16 family.

It is found in the secreted. The enzyme catalyses Hydrolysis of (1-&gt;4)-beta-D-glucosidic linkages in beta-D-glucans containing (1-&gt;3)- and (1-&gt;4)-bonds.. The polypeptide is Beta-glucanase (bglS) (Bacillus subtilis (strain 168)).